The sequence spans 460 residues: Phosphoenolpyruvate carboxylase (460 aa).

This sequence belongs to the PEPCase type 2 family. Homotetramer. The cofactor is Mg(2+).

The enzyme catalyses oxaloacetate + phosphate = phosphoenolpyruvate + hydrogencarbonate. Catalyzes the irreversible beta-carboxylation of phosphoenolpyruvate (PEP) to form oxaloacetate (OAA), a four-carbon dicarboxylic acid source for the tricarboxylic acid cycle. The polypeptide is Phosphoenolpyruvate carboxylase (Pyrobaculum aerophilum (strain ATCC 51768 / DSM 7523 / JCM 9630 / CIP 104966 / NBRC 100827 / IM2)).